The primary structure comprises 734 residues: Serine protease FAM111B (734 aa).

Met1 bears the N-acetylmethionine mark. Basic and acidic residues-rich tracts occupy residues 1–10 (MNSMKTEENK) and 17–32 (DDQR…TVMK). The segment at 1 to 32 (MNSMKTEENKSFSAMEDDQRTRPEVSKDTVMK) is disordered. Lys284 is covalently cross-linked (Glycyl lysine isopeptide (Lys-Gly) (interchain with G-Cter in SUMO2)). The disordered stretch occupies residues 285-321 (QNESATDEINHQSLIQSKKKVHKPKKDGETKDVEHSR). Positions 310–321 (KDGETKDVEHSR) are enriched in basic and acidic residues. Active-site charge relay system residues include His490, Asp544, and Ser650. Residues 712–734 (TYDEEKGKQESSLQDHQIEPMEC) form a disordered region.

Belongs to the FAM111 family. As to expression, widely expressed.

Serine protease. This is Serine protease FAM111B from Homo sapiens (Human).